The sequence spans 147 residues: Hemoglobin subunit gamma (147 aa).

A Globin domain is found at 3 to 147; it reads HFTVEEKAVI…VAIALAHKYH (145 aa). Positions 64 and 93 each coordinate heme b.

Belongs to the globin family. In terms of assembly, heterotetramer of two alpha chains and two gamma chains in fetal hemoglobin (Hb F). In terms of tissue distribution, red blood cells.

Functionally, gamma chains make up the fetal hemoglobin F, in combination with alpha chains. This Cheirogaleus medius (Fat-tailed dwarf lemur) protein is Hemoglobin subunit gamma (HBG).